Reading from the N-terminus, the 226-residue chain is Enolase-phosphatase E1 (226 aa).

The protein belongs to the HAD-like hydrolase superfamily. MasA/MtnC family. In terms of assembly, monomer. Mg(2+) is required as a cofactor.

It carries out the reaction 5-methylsulfanyl-2,3-dioxopentyl phosphate + H2O = 1,2-dihydroxy-5-(methylsulfanyl)pent-1-en-3-one + phosphate. The protein operates within amino-acid biosynthesis; L-methionine biosynthesis via salvage pathway; L-methionine from S-methyl-5-thio-alpha-D-ribose 1-phosphate: step 3/6. It participates in amino-acid biosynthesis; L-methionine biosynthesis via salvage pathway; L-methionine from S-methyl-5-thio-alpha-D-ribose 1-phosphate: step 4/6. Its function is as follows. Bifunctional enzyme that catalyzes the enolization of 2,3-diketo-5-methylthiopentyl-1-phosphate (DK-MTP-1-P) into the intermediate 2-hydroxy-3-keto-5-methylthiopentenyl-1-phosphate (HK-MTPenyl-1-P), which is then dephosphorylated to form the acireductone 1,2-dihydroxy-3-keto-5-methylthiopentene (DHK-MTPene). The sequence is that of Enolase-phosphatase E1 from Shewanella baltica (strain OS195).